We begin with the raw amino-acid sequence, 407 residues long: Extracellular superoxide dismutase [Cu-Zn] 3 (407 aa).

The signal sequence occupies residues 1–19 (MRLLSVLVFLISVISIAKA). Over 20–386 (DYQYAFCKFN…SESYNDNEPG (367 aa)) the chain is Extracellular. 3 N-linked (GlcNAc...) asparagine glycosylation sites follow: Asn-51, Asn-205, and Asn-224. Residues His-245 and His-247 each coordinate Cu cation. Asn-256 carries N-linked (GlcNAc...) asparagine glycosylation. Residue His-263 participates in Cu cation binding. Residues His-263, His-271, His-280, and Asp-283 each contribute to the Zn(2+) site. His-320 contacts Cu cation. N-linked (GlcNAc...) asparagine glycosylation is found at Asn-321 and Asn-364. The chain crosses the membrane as a helical span at residues 387 to 406 (SSSTVIPFFALIIFSIIFAL). Position 407 (Leu-407) is a topological domain, cytoplasmic.

The protein belongs to the Cu-Zn superoxide dismutase family. Cu cation is required as a cofactor. It depends on Zn(2+) as a cofactor.

It localises to the cell membrane. The enzyme catalyses 2 superoxide + 2 H(+) = H2O2 + O2. Functionally, protect the extracellular space from toxic effect of reactive oxygen intermediates by converting superoxyde radicals into hydrogen peroxyde and oxygen. The protein is Extracellular superoxide dismutase [Cu-Zn] 3 (sodC) of Dictyostelium discoideum (Social amoeba).